The primary structure comprises 394 residues: Venom metalloproteinase antarease-like TtrivMP_A (394 aa).

Residues 1-16 (MISYLASIFLLATVSA) form the signal peptide. Positions 17-158 (VPSGRVEVVF…AENVSRMAEE (142 aa)) are excised as a propeptide. A glycan (N-linked (GlcNAc...) asparagine) is linked at Asn151. Positions 162 to 390 (IVVEYYIVTD…KPTAFCIFEQ (229 aa)) constitute a Peptidase M12B domain. A disulfide bridge connects residues Cys295 and Cys386. His319 contributes to the Zn(2+) binding site. The active site involves Glu320. His323 and His329 together coordinate Zn(2+).

The protein belongs to the venom metalloproteinase (M12B) family. Zn(2+) serves as cofactor. Expressed by the venom gland.

Its subcellular location is the secreted. Inhibited by EDTA. Functionally, acts as a metalloprotease. Penetrates intact tissue and specifically cleaves the vesicle-associated membrane protein 2 (VAMP2) (part of the SNARE complex) involved in pancreatic secretion, thus disrupting the normal vesicular traffic. The protein is Venom metalloproteinase antarease-like TtrivMP_A of Tityus trivittatus (Argentinean scorpion).